Reading from the N-terminus, the 398-residue chain is Succinate--CoA ligase [ADP-forming] subunit beta (398 aa).

An ATP-grasp domain is found at 9 to 254 (KRLLHEYGAP…ISEEDPKEIE (246 aa)). ATP contacts are provided by residues Lys-46, 53-55 (GRG), Glu-109, Ala-112, and Glu-117. Residues Asn-209 and Asp-223 each coordinate Mg(2+). Substrate-binding positions include Asn-274 and 331–333 (GIM).

This sequence belongs to the succinate/malate CoA ligase beta subunit family. In terms of assembly, heterotetramer of two alpha and two beta subunits. Mg(2+) serves as cofactor.

It carries out the reaction succinate + ATP + CoA = succinyl-CoA + ADP + phosphate. The enzyme catalyses GTP + succinate + CoA = succinyl-CoA + GDP + phosphate. It participates in carbohydrate metabolism; tricarboxylic acid cycle; succinate from succinyl-CoA (ligase route): step 1/1. Its function is as follows. Succinyl-CoA synthetase functions in the citric acid cycle (TCA), coupling the hydrolysis of succinyl-CoA to the synthesis of either ATP or GTP and thus represents the only step of substrate-level phosphorylation in the TCA. The beta subunit provides nucleotide specificity of the enzyme and binds the substrate succinate, while the binding sites for coenzyme A and phosphate are found in the alpha subunit. The sequence is that of Succinate--CoA ligase [ADP-forming] subunit beta from Bartonella bacilliformis (strain ATCC 35685 / KC583 / Herrer 020/F12,63).